We begin with the raw amino-acid sequence, 544 residues long: Cytochrome P450 82A1 (544 aa).

Heme is bound at residue Cys-481.

Belongs to the cytochrome P450 family. Heme is required as a cofactor.

Its subcellular location is the membrane. The protein is Cytochrome P450 82A1 (CYP82A1) of Pisum sativum (Garden pea).